A 1178-amino-acid polypeptide reads, in one-letter code: Zinc finger CCHC domain-containing protein 2 (1178 aa).

Disordered stretches follow at residues 1-90, 207-249, 557-683, and 936-986; these read MLRM…GPSA, AARG…RVGG, VTSA…SVNQ, and LSTA…SDST. Positions 43-67 are enriched in pro residues; that stretch reads PPPPPPPPAGPSRGPLPPPPPPRGL. The span at 75-88 shows a compositional bias: gly residues; that stretch reads AAAGAGMPGGGGGP. The span at 208-219 shows a compositional bias: basic and acidic residues; it reads ARGEGSRGGAED. The segment covering 220–229 has biased composition (acidic residues); sequence ERGEDGDGEQ. Residue Ser236 is modified to Phosphoserine. The span at 580-594 shows a compositional bias: basic and acidic residues; the sequence is PQTEKEKIKKTDNRL. Residues 595–607 are compositionally biased toward polar residues; it reads NSRINGIRLSTPQ. Over residues 632–641 the composition is skewed to low complexity; the sequence is SSESYSSPSS. Positions 642-661 are enriched in basic and acidic residues; sequence PRHDGRESFESEEEKDRDTD. Residues 665–683 show a composition bias toward polar residues; that stretch reads EDSGNPSTTRFTGYGSVNQ. Positions 937 to 948 are enriched in low complexity; it reads STAATSPQPASA. Positions 959-973 are enriched in pro residues; that stretch reads PAVPTHTPGPAPSPS. Residues 974 to 986 show a composition bias toward polar residues; it reads PALTHSTAQSDST. Residues 1131–1148 form a CCHC-type zinc finger; it reads VSCYNCGVSGHYAQDCKQ.

This chain is Zinc finger CCHC domain-containing protein 2, found in Homo sapiens (Human).